The primary structure comprises 788 residues: Endonuclease MutS2 (788 aa).

332–339 is an ATP binding site; it reads GPNTGGKT. The 76-residue stretch at 713–788 folds into the Smr domain; that stretch reads VDLRGMDAEE…GTGVTVVEIK (76 aa).

Belongs to the DNA mismatch repair MutS family. MutS2 subfamily. As to quaternary structure, homodimer. Binds to stalled ribosomes, contacting rRNA.

Functionally, endonuclease that is involved in the suppression of homologous recombination and thus may have a key role in the control of bacterial genetic diversity. In terms of biological role, acts as a ribosome collision sensor, splitting the ribosome into its 2 subunits. Detects stalled/collided 70S ribosomes which it binds and splits by an ATP-hydrolysis driven conformational change. Acts upstream of the ribosome quality control system (RQC), a ribosome-associated complex that mediates the extraction of incompletely synthesized nascent chains from stalled ribosomes and their subsequent degradation. Probably generates substrates for RQC. This chain is Endonuclease MutS2, found in Clostridium botulinum (strain Loch Maree / Type A3).